A 115-amino-acid chain; its full sequence is NADH-ubiquinone oxidoreductase chain 3 (115 aa).

3 helical membrane passes run Met1 to Ile21, Phe55 to Leu75, and Ala87 to Leu107.

Belongs to the complex I subunit 3 family.

It is found in the mitochondrion membrane. The catalysed reaction is a ubiquinone + NADH + 5 H(+)(in) = a ubiquinol + NAD(+) + 4 H(+)(out). Its function is as follows. Core subunit of the mitochondrial membrane respiratory chain NADH dehydrogenase (Complex I) that is believed to belong to the minimal assembly required for catalysis. Complex I functions in the transfer of electrons from NADH to the respiratory chain. The immediate electron acceptor for the enzyme is believed to be ubiquinone. This Myxine glutinosa (Atlantic hagfish) protein is NADH-ubiquinone oxidoreductase chain 3 (MT-ND3).